Reading from the N-terminus, the 805-residue chain is Kinesin-like protein Klp10A (805 aa).

The interval 1 to 274 (MDMITVGQSV…FVPLLDGQAV (274 aa)) is globular. 2 disordered regions span residues 68–94 (QHAA…SAIG) and 117–211 (IPNP…RRSH). Positions 80-94 (APMNLSRNPTQSAIG) are enriched in polar residues. Residues 123 to 136 (SSNSVNTNSNSNTT) show a composition bias toward low complexity. At Ser157 the chain carries Phosphoserine. The span at 158 to 179 (QAATGQQQTRIASAVPNNTLPN) shows a compositional bias: polar residues. Low complexity predominate over residues 180 to 200 (PSAAASAGPAAQGVATAATTQ). The stretch at 205 to 244 (ASTRRSHALKEVERLKENREKRRARQAEMKEEKVALMNQD) forms a coiled coil. One can recognise a Kinesin motor domain in the interval 278–610 (QITVCVRKRP…LRYADRVKEL (333 aa)). 368–375 (GQTGSGKT) provides a ligand contact to ATP. Position 630 is a phosphothreonine (Thr630). The tract at residues 633–688 (EEEEELNMVHPHSHQLHPNSHAPASQSNNQRAPASHHSGAVIHNNNNNNNKNGNAG) is disordered. A compositionally biased stretch (polar residues) spans 648 to 664 (LHPNSHAPASQSNNQRA). The segment covering 676–688 (NNNNNNNKNGNAG) has biased composition (low complexity). 3 positions are modified to phosphoserine: Ser795, Ser797, and Ser800.

Belongs to the TRAFAC class myosin-kinesin ATPase superfamily. Kinesin family. MCAK/KIF2 subfamily. As to quaternary structure, interacts with Alms1a (via C-terminus). As to expression, expressed in male germline stem cells and spermatogonia (at protein level).

The protein localises to the cytoplasm. Its subcellular location is the cytoskeleton. The protein resides in the microtubule organizing center. It localises to the centrosome. It is found in the spindle pole. The protein localises to the chromosome. Its subcellular location is the centromere. In terms of biological role, required during anaphase to drive sister chromatid separation to promote flux by actively depolymerizing kinetochore microtubules at their pole-associated minus ends, thereby moving chromatids through a 'poleward flux'. Involved in asymmetric cell division of sensory organ precursor (SOP) cells by playing a role in the asymmetric localization of Sara-expressing endosomes to the pIIa daughter cell but not to the pIIb cell. Klp98A targets Sara-expressing endosomes to the central spindle which is symmetrically arranged in early cell division. During late cytokinesis, central spindle asymmetry is generated by enrichment of Patronin on the pIIb side which protects microtubules from depolymerization by Klp10A while unprotected microtubules on the pIIa side are disassembled by Klp10A, leading to the asymmetric delivery of Sara-expressing endosomes to the pIIa daughter cell. The sequence is that of Kinesin-like protein Klp10A from Drosophila melanogaster (Fruit fly).